Consider the following 561-residue polypeptide: Mercuric reductase (561 aa).

An HMA domain is found at 1-65 (MTTLKITGMT…AVAGLGYEAT (65 aa)). Positions 11 and 14 each coordinate a metal cation. The FAD site is built by Ala110, Gly130, and Thr135. The cysteines at positions 136 and 141 are disulfide-linked. FAD-binding residues include Lys145, Ala211, Asp403, and Val411. Hg(2+) contacts are provided by Cys558 and Cys559.

This sequence belongs to the class-I pyridine nucleotide-disulfide oxidoreductase family. In terms of assembly, homodimer. FAD is required as a cofactor.

It carries out the reaction Hg + NADP(+) + H(+) = Hg(2+) + NADPH. Functionally, resistance to Hg(2+) in bacteria appears to be governed by a specialized system which includes mercuric reductase. MerA protein is responsible for volatilizing mercury as Hg(0). This chain is Mercuric reductase (merA), found in Enterobacter agglomerans (Erwinia herbicola).